We begin with the raw amino-acid sequence, 186 residues long: MDADSDVALDIIITNVVCVFRTRCHLNLRKIALEGLNVIYKREVGKVLMKLRKPRITATIWSSGKIICTGATSEEEAKVGARRLARSLQKLGFQVKFTEFKVVNVLAVCTMPFEIRLAEFTKQNRPHASYEPELHPAVCYRIKSLRTTLQIFSTGSITVTGPDVKSVATAIEQIYPFVFESRKAIL.

It belongs to the TBP family.

The protein localises to the cytoplasm. The protein resides in the nucleus. Its function is as follows. Part of a specialized transcription system that mediates the transcription of most ribosomal proteins through the 5'-TCT-3' motif which is a core promoter element at these genes. Seems to also mediate the transcription of NF1. Does not bind the TATA box. Members of the TBP family are differentially required to regulate transcription and development during early embryogenesis. Particularly regulates genes that have a role in catabolism. This chain is TATA box-binding protein-like 1 (tbpl1), found in Xenopus tropicalis (Western clawed frog).